We begin with the raw amino-acid sequence, 233 residues long: MVTTQKAVVLLSGGLDSSTVLFRAKALGYACYALSFDYGQRHRRELEAAIAIATSAGVVEHQILPLNLRLWGGSALTDLSIDLPRDRDLATMSQEIPVTYVPARNTIFLSVALAYAEALEARSVHIGVNALDYSGYPDCRPDYIAAMQEVYRLGTKQGREGQPIEIVTPLIDLHKTDIIRLGHGYGVPWEKTWSCYSDGQQACGRCDACRLRLAAFAELGLVDPLPYAVHPPL.

11 to 21 (LSGGLDSSTVL) is an ATP binding site. Residues C195, C203, C206, and C209 each contribute to the Zn(2+) site.

The protein belongs to the QueC family. Zn(2+) serves as cofactor.

The catalysed reaction is 7-carboxy-7-deazaguanine + NH4(+) + ATP = 7-cyano-7-deazaguanine + ADP + phosphate + H2O + H(+). It participates in purine metabolism; 7-cyano-7-deazaguanine biosynthesis. Catalyzes the ATP-dependent conversion of 7-carboxy-7-deazaguanine (CDG) to 7-cyano-7-deazaguanine (preQ(0)). The protein is 7-cyano-7-deazaguanine synthase of Thermosynechococcus vestitus (strain NIES-2133 / IAM M-273 / BP-1).